The primary structure comprises 601 residues: Transcription factor ATEG_07666 (601 aa).

Positions 17–44 (CEECRRRKARCDRVRPKCGFCTENGMQC) form a DNA-binding region, zn(2)-C6 fungal-type.

Its subcellular location is the nucleus. In terms of biological role, specific transcriptional regulator for the azasperpyranone A biosynthesis cluster B. This is Transcription factor ATEG_07666 from Aspergillus terreus (strain NIH 2624 / FGSC A1156).